A 209-amino-acid polypeptide reads, in one-letter code: Mitochondrial import inner membrane translocase subunit Tim23 (209 aa).

Helical transmembrane passes span 73-93 (FELAFFTIGGCCISGAAFGAL), 125-145 (ALWANTLGSLALLYSAFGVIV), and 180-200 (GGLAGLALASTFALYNNWEHI).

This sequence belongs to the Tim17/Tim22/Tim23 family. Component of the TIM23 complex at least composed of timm23, timm17 and timm50. The complex interacts with the timm44 component of the PAM complex.

It is found in the mitochondrion inner membrane. Its function is as follows. Essential component of the TIM23 complex, a complex that mediates the translocation of transit peptide-containing proteins across the mitochondrial inner membrane. In Xenopus laevis (African clawed frog), this protein is Mitochondrial import inner membrane translocase subunit Tim23 (timm23).